Reading from the N-terminus, the 131-residue chain is Small ribosomal subunit protein uS8 (131 aa).

Belongs to the universal ribosomal protein uS8 family. Part of the 30S ribosomal subunit. Contacts proteins S5 and S12.

Its function is as follows. One of the primary rRNA binding proteins, it binds directly to 16S rRNA central domain where it helps coordinate assembly of the platform of the 30S subunit. The chain is Small ribosomal subunit protein uS8 from Polaromonas sp. (strain JS666 / ATCC BAA-500).